A 430-amino-acid chain; its full sequence is MALEGMSKRKRKRSVQEGENPDDGVRGSPPEDYRLGQVASSLFRGEHHSRGGTGRLASLFSSLEPQIQPVYVPVPKQTIKKTKRNEEEESTSQIERPLSQEPAKKVKAKKKHTNAEKKLADRESALASADLEEEIHQKQGQKRKNSQPGVKVADRKILDDTEDTVVSQRKKIQINQEEERLKNERTVFVGNLPVTCNKKKLKSFFKEYGQIESVRFRSLIPAEGTLSKKLAAIKRKIHPDQKNINAYVVFKEESAATQALKRNGAQIADGFRIRVDLASETSSRDKRSVFVGNLPYKVEESAIEKHFLDCGSIMAVRIVRDKMTGIGKGFGYVLFENTDSVHLALKLNNSELMGRKLRVMRSVNKEKFKQQNSNPRLKNVSKPKQGLNFTSKTAEGHPKSLFIGEKAVLLKTKKKGQKKSGRPKKQRKQK.

3 disordered regions span residues 1-55 (MALE…GTGR), 72-123 (VPVP…ADRE), and 134-153 (EIHQKQGQKRKNSQPGVKVA). Ser-14, Ser-28, and Ser-99 each carry phosphoserine. A compositionally biased stretch (basic and acidic residues) spans 23-34 (DGVRGSPPEDYR). The span at 113-123 (TNAEKKLADRE) shows a compositional bias: basic and acidic residues. Lys-151 bears the N6-acetyllysine mark. 2 consecutive RRM domains span residues 185-280 (RTVF…LASE) and 287-364 (RSVF…RSVN). Residue Lys-242 forms a Glycyl lysine isopeptide (Lys-Gly) (interchain with G-Cter in SUMO2) linkage. A Phosphoserine modification is found at Ser-288. Disordered stretches follow at residues 365 to 395 (KEKFKQQNSNPRLKNVSKPKQGLNFTSKTAE) and 411 to 430 (KTKKKGQKKSGRPKKQRKQK).

Belongs to the RRM RBM34 family.

The protein resides in the nucleus. It localises to the nucleolus. The chain is RNA-binding protein 34 (RBM34) from Homo sapiens (Human).